Reading from the N-terminus, the 309-residue chain is DDRGK domain-containing protein 1 (309 aa).

Over Met1 to Asp2 the chain is Lumenal. Residues Leu3–Leu23 traverse the membrane as a helical segment. The Cytoplasmic portion of the chain corresponds to Gln24–Ser309. The interval Thr30–Lys178 is disordered. A compositionally biased stretch (low complexity) spans Arg53–Asp84. The segment covering Ala85–Asp95 has biased composition (acidic residues). The segment covering Leu107–Lys178 has biased composition (basic and acidic residues).

It belongs to the DDRGK1 family. As to quaternary structure, interacts with Atg9; the interaction is transient.

It localises to the endoplasmic reticulum membrane. In terms of biological role, substrate adapter for ufmylation, the covalent attachment of the ubiquitin-like modifier UFM1 to substrate proteins. Required for ufmylation of Atg9; protects the nervous system during aging, possibly by stabilizing Atg9 and supporting its function. The polypeptide is DDRGK domain-containing protein 1 (Drosophila persimilis (Fruit fly)).